Here is a 659-residue protein sequence, read N- to C-terminus: ATP-binding cassette sub-family D member 3 (659 aa).

Residues 2-61 (AAFSKYLTARNSSLAGAAFLLFCLLHKRRRALGLHGKKSGKPPLQNNEKEGKKERAVVDK) form an interaction with PEX19 region. A glycan (N-linked (GlcNAc...) asparagine) is linked at asparagine 12. Lysine 61 carries the post-translational modification N6-acetyllysine. The chain crosses the membrane as a helical span at residues 84-104 (GYLILIAVMLVSRTYCDVWMI). Residues 85 to 372 (YLILIAVMLV…MLLRMSQALG (288 aa)) form the ABC transmembrane type-1 domain. Residue asparagine 106 is glycosylated (N-linked (GlcNAc...) asparagine). A helical membrane pass occupies residues 126–146 (LFNFIAAMPLISLVNNFLKYG). Asparagine 206 is a glycosylation site (N-linked (GlcNAc...) asparagine). Residues 224–244 (AIGAQGPASMMAYLLVSGLFL) form a helical membrane-spanning segment. Lysine 260 carries the N6-acetyllysine modification. Residues 313–333 (MGFIDSIIAKYIATVVGYLVV) traverse the membrane as a helical segment. An N6-acetyllysine modification is found at lysine 399. Position 424 is a phosphoserine (serine 424). Residues 434–659 (INADNIIKFD…ITEDTVEFGS (226 aa)) form the ABC transporter domain. Residue 473 to 480 (GPNGCGKS) participates in ATP binding. Residue lysine 533 is modified to N6-acetyllysine. At serine 659 the chain carries Phosphoserine.

This sequence belongs to the ABC transporter superfamily. ABCD family. Peroxisomal fatty acyl CoA transporter (TC 3.A.1.203) subfamily. In terms of assembly, homodimers. Can form heterodimers with ABCD1 and ABCD2. Dimerization is necessary to form an active transporter. Interacts with PEX19; mediates the targeting of ABCD3 to peroxisomes. Ubiquitinated by PEX2 during pexophagy in response to starvation, leading to its degradation.

The protein resides in the peroxisome membrane. It carries out the reaction a very long-chain fatty acyl-CoA + H2O = a very long-chain fatty acid + CoA + H(+). The enzyme catalyses a very long-chain fatty acid(in) + ATP + H2O = a very long-chain fatty acid(out) + ADP + phosphate + H(+). The catalysed reaction is a long-chain fatty acyl-CoA + H2O = a long-chain fatty acid + CoA + H(+). It catalyses the reaction a long-chain fatty acid(in) + ATP + H2O = a long-chain fatty acid(out) + ADP + phosphate + H(+). It carries out the reaction pristanoyl-CoA + H2O = 2,6,10,14-tetramethylpentadecanoate + CoA + H(+). The enzyme catalyses 2,6,10,14-tetramethylpentadecanoate(in) + ATP + H2O = 2,6,10,14-tetramethylpentadecanoate(out) + ADP + phosphate + H(+). The catalysed reaction is hexadecanedioyl-CoA + H2O = hexadecanedioate + CoA + H(+). It catalyses the reaction hexadecanedioate(in) + ATP + H2O = hexadecanedioate(out) + ADP + phosphate + H(+). It carries out the reaction (5Z,8Z,11Z,14Z,17Z)-eicosapentaenoyl-CoA + H2O = (5Z,8Z,11Z,14Z,17Z)-eicosapentaenoate + CoA + H(+). The enzyme catalyses (5Z,8Z,11Z,14Z,17Z)-eicosapentaenoate(in) + ATP + H2O = (5Z,8Z,11Z,14Z,17Z)-eicosapentaenoate(out) + ADP + phosphate + H(+). The catalysed reaction is (4Z,7Z,10Z,13Z,16Z,19Z)-docosahexaenoyl-CoA + H2O = (4Z,7Z,10Z,13Z,16Z,19Z)-docosahexaenoate + CoA + H(+). It catalyses the reaction (4Z,7Z,10Z,13Z,16Z,19Z)-docosahexaenoate(in) + ATP + H2O = (4Z,7Z,10Z,13Z,16Z,19Z)-docosahexaenoate(out) + ADP + phosphate + H(+). Its function is as follows. Broad substrate specificity ATP-dependent transporter of the ATP-binding cassette (ABC) family that catalyzes the transport of long-chain fatty acids (LCFA)-CoA, dicarboxylic acids-CoA, long-branched-chain fatty acids-CoA and bile acids from the cytosol to the peroxisome lumen for beta-oxydation. Has fatty acyl-CoA thioesterase and ATPase activities. Probably hydrolyzes fatty acyl-CoAs into free fatty acids prior to their ATP-dependent transport into peroxisomes. Thus, play a role in regulation of LCFAs and energy metabolism namely, in the degradation and biosynthesis of fatty acids by beta-oxidation. The polypeptide is ATP-binding cassette sub-family D member 3 (Abcd3) (Rattus norvegicus (Rat)).